Here is a 142-residue protein sequence, read N- to C-terminus: UPF0305 protein MK0666 (142 aa).

It belongs to the UPF0305 family.

This chain is UPF0305 protein MK0666, found in Methanopyrus kandleri (strain AV19 / DSM 6324 / JCM 9639 / NBRC 100938).